The primary structure comprises 201 residues: Fas apoptotic inhibitory molecule 1 (201 aa).

It belongs to the FAIM1 family.

It is found in the cytoplasm. Plays a role as an inducible effector molecule that mediates Fas resistance produced by surface Ig engagement in B cells. This is Fas apoptotic inhibitory molecule 1 (FAIM) from Bos taurus (Bovine).